The sequence spans 214 residues: ATP-dependent dethiobiotin synthetase BioD (214 aa).

Residue 10 to 15 (GIGKTY) coordinates ATP. T14 is a Mg(2+) binding site. K35 is a catalytic residue. T39 is a binding site for substrate. ATP-binding positions include D44, 109-112 (EGAG), and 169-170 (NC). Mg(2+) contacts are provided by D44 and E109.

The protein belongs to the dethiobiotin synthetase family. Homodimer. Mg(2+) serves as cofactor.

The protein localises to the cytoplasm. It carries out the reaction (7R,8S)-7,8-diammoniononanoate + CO2 + ATP = (4R,5S)-dethiobiotin + ADP + phosphate + 3 H(+). The protein operates within cofactor biosynthesis; biotin biosynthesis; biotin from 7,8-diaminononanoate: step 1/2. In terms of biological role, catalyzes a mechanistically unusual reaction, the ATP-dependent insertion of CO2 between the N7 and N8 nitrogen atoms of 7,8-diaminopelargonic acid (DAPA, also called 7,8-diammoniononanoate) to form a ureido ring. This is ATP-dependent dethiobiotin synthetase BioD from Methanocaldococcus jannaschii (strain ATCC 43067 / DSM 2661 / JAL-1 / JCM 10045 / NBRC 100440) (Methanococcus jannaschii).